The chain runs to 545 residues: Eukaryotic translation initiation factor 3 subunit D-2 (545 aa).

Residues 94–148 are disordered; the sequence is FQRGRFRGNTRNNPRTRGRTGRGGAVTGTGGNQPGVGVNERTKYGKGRDNRRQMG. Positions 95-113 are enriched in basic residues; that stretch reads QRGRFRGNTRNNPRTRGRT. Positions 114–127 are enriched in gly residues; sequence GRGGAVTGTGGNQP. Over residues 133–145 the composition is skewed to basic and acidic residues; that stretch reads ERTKYGKGRDNRR. The segment at 287 to 301 is RNA gate; the sequence is QFDLLTVNETALEPP.

It belongs to the eIF-3 subunit D family. Component of the eukaryotic translation initiation factor 3 (eIF-3) complex. The eIF-3 complex interacts with pix.

It is found in the cytoplasm. MRNA cap-binding component of the eukaryotic translation initiation factor 3 (eIF-3) complex, which is involved in protein synthesis of a specialized repertoire of mRNAs and, together with other initiation factors, stimulates binding of mRNA and methionyl-tRNAi to the 40S ribosome. The eIF-3 complex specifically targets and initiates translation of a subset of mRNAs involved in cell proliferation. In the eIF-3 complex, eif3d specifically recognizes and binds the 7-methylguanosine cap of a subset of mRNAs. The sequence is that of Eukaryotic translation initiation factor 3 subunit D-2 from Drosophila pseudoobscura pseudoobscura (Fruit fly).